The chain runs to 150 residues: SsrA-binding protein (150 aa).

Positions 130 to 150 are disordered; the sequence is DKRESLKEKDDRREMDRMFKR.

The protein belongs to the SmpB family.

It localises to the cytoplasm. Required for rescue of stalled ribosomes mediated by trans-translation. Binds to transfer-messenger RNA (tmRNA), required for stable association of tmRNA with ribosomes. tmRNA and SmpB together mimic tRNA shape, replacing the anticodon stem-loop with SmpB. tmRNA is encoded by the ssrA gene; the 2 termini fold to resemble tRNA(Ala) and it encodes a 'tag peptide', a short internal open reading frame. During trans-translation Ala-aminoacylated tmRNA acts like a tRNA, entering the A-site of stalled ribosomes, displacing the stalled mRNA. The ribosome then switches to translate the ORF on the tmRNA; the nascent peptide is terminated with the 'tag peptide' encoded by the tmRNA and targeted for degradation. The ribosome is freed to recommence translation, which seems to be the essential function of trans-translation. The polypeptide is SsrA-binding protein (Phocaeicola vulgatus (strain ATCC 8482 / DSM 1447 / JCM 5826 / CCUG 4940 / NBRC 14291 / NCTC 11154) (Bacteroides vulgatus)).